Here is an 87-residue protein sequence, read N- to C-terminus: Exodeoxyribonuclease 7 small subunit (87 aa).

Belongs to the XseB family. As to quaternary structure, heterooligomer composed of large and small subunits.

Its subcellular location is the cytoplasm. It catalyses the reaction Exonucleolytic cleavage in either 5'- to 3'- or 3'- to 5'-direction to yield nucleoside 5'-phosphates.. Its function is as follows. Bidirectionally degrades single-stranded DNA into large acid-insoluble oligonucleotides, which are then degraded further into small acid-soluble oligonucleotides. The protein is Exodeoxyribonuclease 7 small subunit of Pelotomaculum thermopropionicum (strain DSM 13744 / JCM 10971 / SI).